A 358-amino-acid chain; its full sequence is Phospho-N-acetylmuramoyl-pentapeptide-transferase (358 aa).

10 consecutive transmembrane segments (helical) span residues 27-47, 73-93, 97-117, 134-154, 170-190, 197-217, 233-253, 261-281, 286-306, and 335-355; these read IYAM…VIRV, TMGG…WADL, YIWT…VDDY, MFWQ…KPGF, LWFW…NAVN, GLAI…SYVA, GAGE…GFLW, VFMG…IAVI, ILLV…IFQV, and KIIV…ISTL.

The protein belongs to the glycosyltransferase 4 family. MraY subfamily. The cofactor is Mg(2+).

The protein resides in the cell inner membrane. The enzyme catalyses UDP-N-acetyl-alpha-D-muramoyl-L-alanyl-gamma-D-glutamyl-meso-2,6-diaminopimeloyl-D-alanyl-D-alanine + di-trans,octa-cis-undecaprenyl phosphate = di-trans,octa-cis-undecaprenyl diphospho-N-acetyl-alpha-D-muramoyl-L-alanyl-D-glutamyl-meso-2,6-diaminopimeloyl-D-alanyl-D-alanine + UMP. The protein operates within cell wall biogenesis; peptidoglycan biosynthesis. Its function is as follows. Catalyzes the initial step of the lipid cycle reactions in the biosynthesis of the cell wall peptidoglycan: transfers peptidoglycan precursor phospho-MurNAc-pentapeptide from UDP-MurNAc-pentapeptide onto the lipid carrier undecaprenyl phosphate, yielding undecaprenyl-pyrophosphoryl-MurNAc-pentapeptide, known as lipid I. The polypeptide is Phospho-N-acetylmuramoyl-pentapeptide-transferase (Pelobacter propionicus (strain DSM 2379 / NBRC 103807 / OttBd1)).